A 239-amino-acid polypeptide reads, in one-letter code: MKRLGVNIDHVATVRNARGSFHPDPFTIAKHVIKCGAHSVTIHLREDRRHIKDSDVVKICKSRKIITNLEISLNKEIIDIALKNRPNFICIVPEKRKEVTTEGGLNLIKNKKKIKSIISLFNKKSIRTSLFIDPNLKDIKIAKELNATCVELHTGKISNLIKENKSYKNEYLKIKKCSELGVKLGIEVHAGHGLDYKTTSILSKIKEITEFNIGHFIIGESLTHGLKKTITIFKEITNK.

Position 7 (Asn7) interacts with 3-amino-2-oxopropyl phosphate. 1-deoxy-D-xylulose 5-phosphate is bound at residue 9–10; that stretch reads DH. A 3-amino-2-oxopropyl phosphate-binding site is contributed by Arg18. His43 serves as the catalytic Proton acceptor. 1-deoxy-D-xylulose 5-phosphate is bound by residues Arg45 and His50. Glu70 serves as the catalytic Proton acceptor. Thr100 lines the 1-deoxy-D-xylulose 5-phosphate pocket. His192 serves as the catalytic Proton donor. 3-amino-2-oxopropyl phosphate contacts are provided by residues Gly193 and 214-215; that span reads GH.

This sequence belongs to the PNP synthase family. In terms of assembly, homooctamer; tetramer of dimers.

Its subcellular location is the cytoplasm. The catalysed reaction is 3-amino-2-oxopropyl phosphate + 1-deoxy-D-xylulose 5-phosphate = pyridoxine 5'-phosphate + phosphate + 2 H2O + H(+). It participates in cofactor biosynthesis; pyridoxine 5'-phosphate biosynthesis; pyridoxine 5'-phosphate from D-erythrose 4-phosphate: step 5/5. Its function is as follows. Catalyzes the complicated ring closure reaction between the two acyclic compounds 1-deoxy-D-xylulose-5-phosphate (DXP) and 3-amino-2-oxopropyl phosphate (1-amino-acetone-3-phosphate or AAP) to form pyridoxine 5'-phosphate (PNP) and inorganic phosphate. In Pelagibacter ubique (strain HTCC1062), this protein is Pyridoxine 5'-phosphate synthase.